Here is a 249-residue protein sequence, read N- to C-terminus: Flagellar brake protein YcgR (249 aa).

A PilZ domain is found at 117 to 236; that stretch reads QRREFFRVDA…ERELQQVIFS (120 aa).

This sequence belongs to the YcgR family. In terms of assembly, monomer. Interacts with the flagellar basal bodies.

It localises to the bacterial flagellum basal body. In terms of biological role, acts as a flagellar brake, regulating swimming and swarming in a bis-(3'-5') cyclic diguanylic acid (c-di-GMP)-dependent manner. Binds 1 c-di-GMP dimer per subunit. Increasing levels of c-di-GMP lead to decreased motility. The chain is Flagellar brake protein YcgR from Erwinia tasmaniensis (strain DSM 17950 / CFBP 7177 / CIP 109463 / NCPPB 4357 / Et1/99).